A 568-amino-acid chain; its full sequence is Sphingosine-1-phosphate lyase 1 (568 aa).

Topologically, residues 1-40 are lumenal; sequence MPSTDLLMLKAFEPYLEILEVYSTKAKNYVNGHCTKYEPW. The helical; Signal-anchor for type III membrane protein transmembrane segment at 41 to 61 threads the bilayer; the sequence is QLIAWSVVWTLLIVWGYEFVF. Over 62–568 the chain is Cytoplasmic; it reads QPESLWSRFK…SQMNGSPKPH (507 aa). K353 is modified (N6-(pyridoxal phosphate)lysine; alternate). At K353 the chain carries N6-acetyllysine; alternate. A 3'-nitrotyrosine mark is found at Y356 and Y366. S564 bears the Phosphoserine mark.

The protein belongs to the group II decarboxylase family. Sphingosine-1-phosphate lyase subfamily. In terms of assembly, homodimer. The cofactor is pyridoxal 5'-phosphate. In terms of tissue distribution, ubiquitously expressed. Expressed in fetal and adult adrenal gland (at protein level).

It localises to the endoplasmic reticulum membrane. It carries out the reaction sphinganine 1-phosphate = hexadecanal + phosphoethanolamine. The enzyme catalyses sphing-4-enine 1-phosphate = (2E)-hexadecenal + phosphoethanolamine. The protein operates within lipid metabolism; sphingolipid metabolism. Cleaves phosphorylated sphingoid bases (PSBs), such as sphingosine-1-phosphate, into fatty aldehydes and phosphoethanolamine. Elevates stress-induced ceramide production and apoptosis. Required for global lipid homeostasis in liver and cholesterol homeostasis in fibroblasts. Involved in the regulation of pro-inflammatory response and neutrophil trafficking. Modulates neuronal autophagy via phosphoethanolamine production which regulates accumulation of aggregate-prone proteins such as APP. Seems to play a role in establishing neuronal contact sites and axonal maintenance. The polypeptide is Sphingosine-1-phosphate lyase 1 (Homo sapiens (Human)).